Reading from the N-terminus, the 267-residue chain is MAYEPQFNPGETKIAENRRKHMNPNYELKKLREIADEDIVRVLGHRSPGESFKTVHPPLEEMDFEEDPMKDIVEPIEGAKQGTRIRYIQFADSMYNAPAQPYDRARTYMWRFRGVDTGTLSGRQVIEMRELDLEKVSKILLETEIFDPARCGIRGATVHGHSLRFDENGLMFDALQRYIYDEDSGHVVYVKDQVGRPLDQPVDMGEPLPEDELKEITTIYRKDNIGMREDEELLEVVNKIHEARTIGGFGMEVFKKDLNKRLGGANE.

Arg-123 is a coenzyme M binding site.

This sequence belongs to the methyl-coenzyme M reductase gamma subunit family. As to quaternary structure, MCR is a hexamer of two alpha, two beta, and two gamma chains, forming a dimer of heterotrimers. The cofactor is coenzyme F430.

The catalysed reaction is coenzyme B + methyl-coenzyme M = methane + coenzyme M-coenzyme B heterodisulfide. It participates in one-carbon metabolism; methyl-coenzyme M reduction; methane from methyl-coenzyme M: step 1/1. Functionally, component of the methyl-coenzyme M reductase (MCR) I that catalyzes the reductive cleavage of methyl-coenzyme M (CoM-S-CH3 or 2-(methylthio)ethanesulfonate) using coenzyme B (CoB or 7-mercaptoheptanoylthreonine phosphate) as reductant which results in the production of methane and the mixed heterodisulfide of CoB and CoM (CoM-S-S-CoB). This is the final step in methanogenesis. The protein is Methyl-coenzyme M reductase II subunit gamma (mrtG) of Methanothermus fervidus (strain ATCC 43054 / DSM 2088 / JCM 10308 / V24 S).